A 467-amino-acid polypeptide reads, in one-letter code: DEAD-box ATP-dependent RNA helicase CshA (467 aa).

Residues 2–30 (TTFQELGLSQEVMKAIERMGFEETTPIQA) carry the Q motif motif. In terms of domain architecture, Helicase ATP-binding spans 33–203 (IPLSLQNKDV…ERFMNEPELV (171 aa)). 46-53 (AQTGTGKT) is an ATP binding site. The DEAD box motif lies at 151–154 (DEAD). One can recognise a Helicase C-terminal domain in the interval 214–374 (NIQQYYLEVH…RMKPPTLDEA (161 aa)). The segment at 428–467 (TTPVQLTEEPPLAVKREKKRGGRPDGSARSRTKKRRITAH) is disordered. Basic residues predominate over residues 457-467 (SRTKKRRITAH).

The protein belongs to the DEAD box helicase family. CshA subfamily. As to quaternary structure, oligomerizes, may be a member of the RNA degradosome.

It is found in the cytoplasm. The catalysed reaction is ATP + H2O = ADP + phosphate + H(+). DEAD-box RNA helicase possibly involved in RNA degradation. Unwinds dsRNA in both 5'- and 3'-directions, has RNA-dependent ATPase activity. The chain is DEAD-box ATP-dependent RNA helicase CshA from Geobacillus kaustophilus (strain HTA426).